The chain runs to 451 residues: GTPase Der (451 aa).

EngA-type G domains lie at 5–170 (PVVA…VEPE) and 186–359 (IKLA…AAAF). GTP-binding positions include 11-18 (GRPNVGKS), 58-62 (DTGGF), 122-125 (NKAE), 192-199 (GRPNVGKS), 239-243 (DTAGL), and 304-307 (NKWD). Positions 360–444 (AKLSTPKLTR…PLRIEFKSSR (85 aa)) constitute a KH-like domain.

The protein belongs to the TRAFAC class TrmE-Era-EngA-EngB-Septin-like GTPase superfamily. EngA (Der) GTPase family. In terms of assembly, associates with the 50S ribosomal subunit.

Its function is as follows. GTPase that plays an essential role in the late steps of ribosome biogenesis. The polypeptide is GTPase Der (Bordetella petrii (strain ATCC BAA-461 / DSM 12804 / CCUG 43448)).